Reading from the N-terminus, the 241-residue chain is Small ribosomal subunit protein uS2 (241 aa).

Belongs to the universal ribosomal protein uS2 family.

This Shigella flexneri serotype 5b (strain 8401) protein is Small ribosomal subunit protein uS2.